Reading from the N-terminus, the 393-residue chain is uncharacterized protein (393 aa).

The segment at 6–47 adopts a B box-type zinc-finger fold; the sequence is KYDNKCAIHKEHKIKMICATCKDVVCNECILLDHNGHKFGRI. The Zn(2+) site is built by Cys-11, His-14, Cys-34, and His-39.

This is an uncharacterized protein from Dictyostelium discoideum (Social amoeba).